Consider the following 288-residue polypeptide: Threonine-rich protein (288 aa).

An N-terminal signal peptide occupies residues 1–20 (MKAFLLSLATLLACIVLTES). The span at 141-150 (TTVTPQTTDG) shows a compositional bias: polar residues. A disordered region spans residues 141–260 (TTVTPQTTDG…PAPTTTPAPT (120 aa)). Residues 151 to 253 (NTTTEAPTST…TAAPTTTPAP (103 aa)) are compositionally biased toward low complexity.

As to expression, component of the acid-insoluble and acid-soluble organic matrix of the aragonitic skeleton (at protein level).

Its subcellular location is the secreted. The protein is Threonine-rich protein of Acropora millepora (Staghorn coral).